Here is a 234-residue protein sequence, read N- to C-terminus: tRNA1(Val) (adenine(37)-N6)-methyltransferase (234 aa).

This sequence belongs to the methyltransferase superfamily. tRNA (adenine-N(6)-)-methyltransferase family.

The protein resides in the cytoplasm. It catalyses the reaction adenosine(37) in tRNA1(Val) + S-adenosyl-L-methionine = N(6)-methyladenosine(37) in tRNA1(Val) + S-adenosyl-L-homocysteine + H(+). In terms of biological role, specifically methylates the adenine in position 37 of tRNA(1)(Val) (anticodon cmo5UAC). In Pedobacter heparinus (strain ATCC 13125 / DSM 2366 / CIP 104194 / JCM 7457 / NBRC 12017 / NCIMB 9290 / NRRL B-14731 / HIM 762-3), this protein is tRNA1(Val) (adenine(37)-N6)-methyltransferase.